We begin with the raw amino-acid sequence, 266 residues long: Tryptophan synthase alpha chain (266 aa).

Residues glutamate 47 and aspartate 58 each act as proton acceptor in the active site.

Belongs to the TrpA family. Tetramer of two alpha and two beta chains.

It carries out the reaction (1S,2R)-1-C-(indol-3-yl)glycerol 3-phosphate + L-serine = D-glyceraldehyde 3-phosphate + L-tryptophan + H2O. The protein operates within amino-acid biosynthesis; L-tryptophan biosynthesis; L-tryptophan from chorismate: step 5/5. Its function is as follows. The alpha subunit is responsible for the aldol cleavage of indoleglycerol phosphate to indole and glyceraldehyde 3-phosphate. The chain is Tryptophan synthase alpha chain from Leptospira biflexa serovar Patoc (strain Patoc 1 / Ames).